The chain runs to 109 residues: Spermidine export protein MdtI (109 aa).

The next 4 membrane-spanning stretches (helical) occupy residues 6–26 (WVHA…NVFL), 36–56 (IFGL…SQAV), 64–84 (AYAL…WILF), and 88–108 (LNRK…MVKL).

This sequence belongs to the drug/metabolite transporter (DMT) superfamily. Small multidrug resistance (SMR) (TC 2.A.7.1) family. MdtI subfamily. As to quaternary structure, forms a complex with MdtJ.

Its subcellular location is the cell inner membrane. Its function is as follows. Catalyzes the excretion of spermidine. The sequence is that of Spermidine export protein MdtI from Escherichia coli O81 (strain ED1a).